The following is a 348-amino-acid chain: Heptaprenyl diphosphate synthase component 2 (348 aa).

Residues Lys-73, Arg-76, and His-105 each contribute to the isopentenyl diphosphate site. Mg(2+) is bound by residues Asp-112 and Asp-116. An all-trans-hexaprenyl diphosphate-binding site is contributed by Arg-121. Arg-122 is an isopentenyl diphosphate binding site. All-trans-hexaprenyl diphosphate-binding residues include Lys-198, Thr-199, and Gln-236.

It belongs to the FPP/GGPP synthase family. As to quaternary structure, heterodimer of component I and II. The cofactor is Mg(2+).

The enzyme catalyses 4 isopentenyl diphosphate + (2E,6E)-farnesyl diphosphate = all-trans-heptaprenyl diphosphate + 4 diphosphate. In terms of biological role, supplies heptaprenyl diphosphate, the precursor for the side chain of the isoprenoid quinone menaquinone-7 (MQ-7). This chain is Heptaprenyl diphosphate synthase component 2 (hepT), found in Bacillus subtilis (strain 168).